Here is an 876-residue protein sequence, read N- to C-terminus: DNA mismatch repair protein MutS (876 aa).

626–633 (GPNMGGKS) lines the ATP pocket.

The protein belongs to the DNA mismatch repair MutS family.

Its function is as follows. This protein is involved in the repair of mismatches in DNA. It is possible that it carries out the mismatch recognition step. This protein has a weak ATPase activity. This is DNA mismatch repair protein MutS from Bordetella bronchiseptica (strain ATCC BAA-588 / NCTC 13252 / RB50) (Alcaligenes bronchisepticus).